We begin with the raw amino-acid sequence, 105 residues long: Nucleoid-associated protein ABO_1774 (105 aa).

The tract at residues 85–105 (QQQDSMQNMAGGFPFPPGFKP) is disordered.

This sequence belongs to the YbaB/EbfC family. As to quaternary structure, homodimer.

It is found in the cytoplasm. The protein resides in the nucleoid. In terms of biological role, binds to DNA and alters its conformation. May be involved in regulation of gene expression, nucleoid organization and DNA protection. The protein is Nucleoid-associated protein ABO_1774 of Alcanivorax borkumensis (strain ATCC 700651 / DSM 11573 / NCIMB 13689 / SK2).